The chain runs to 99 residues: UPF0235 protein HS_1657 (99 aa).

Belongs to the UPF0235 family.

The polypeptide is UPF0235 protein HS_1657 (Histophilus somni (strain 129Pt) (Haemophilus somnus)).